The chain runs to 362 residues: MRDETPEQPAPLRFGYTTGSCATATSLAAARLLLAGSADDAVEIVLPKGQRVMMRLEFCRATADGAEAATIKDAGDDPDVTHGALIFARVALASAPGVRFHAGPGVGTVTRAGLTLPVGEPAINPVPRQMMTTHLEALAAEHGYAGGFDVTIGVEGGEALALKTMNPRLGIVGGLSILGTTGIVRPFSCSAYIASIHQGIDVARANGIAHIAACTGNASEDAMRAHYQLPDMALIEMGDFAGAVLKHLRRAPVARLSMCGGFGKLSKLAAGHLDLHSRHSSIDLPLLAQWAAEAGASDALQAAMRAANTSQEALKLAHADGVPLGDLVCAQALRVARDIVPPSVAVEIFAIDRQGRFVGEAR.

This sequence belongs to the CbiD family.

It carries out the reaction Co-precorrin-5B + S-adenosyl-L-methionine = Co-precorrin-6A + S-adenosyl-L-homocysteine. It functions in the pathway cofactor biosynthesis; adenosylcobalamin biosynthesis; cob(II)yrinate a,c-diamide from sirohydrochlorin (anaerobic route): step 6/10. Its function is as follows. Catalyzes the methylation of C-1 in cobalt-precorrin-5B to form cobalt-precorrin-6A. This chain is Cobalt-precorrin-5B C(1)-methyltransferase, found in Burkholderia lata (strain ATCC 17760 / DSM 23089 / LMG 22485 / NCIMB 9086 / R18194 / 383).